A 155-amino-acid polypeptide reads, in one-letter code: Biotin carboxyl carrier protein of acetyl-CoA carboxylase (155 aa).

One can recognise a Biotinyl-binding domain in the interval 72–155 (AASDELSGHL…EFDEPLIVIE (84 aa)). At K121 the chain carries N6-biotinyllysine.

Homodimer.

Its pathway is lipid metabolism; fatty acid biosynthesis. In terms of biological role, this protein is a component of the acetyl coenzyme A carboxylase complex; first, biotin carboxylase catalyzes the carboxylation of the carrier protein and then the transcarboxylase transfers the carboxyl group to form malonyl-CoA. This chain is Biotin carboxyl carrier protein of acetyl-CoA carboxylase (accB), found in Haemophilus influenzae (strain ATCC 51907 / DSM 11121 / KW20 / Rd).